The sequence spans 102 residues: Keratinocyte differentiation-associated protein (102 aa).

A signal peptide spans 1 to 22 (MKIPILPVVALLSLLALHAVQG).

As to expression, expression restricted to suprabasal keratinocytes of the epidermis.

The protein resides in the secreted. Functionally, may act as a soluble regulator of keratinocyte differentiation. May play an important role in embryonic skin morphogenesis. This chain is Keratinocyte differentiation-associated protein, found in Mus musculus (Mouse).